A 209-amino-acid chain; its full sequence is Ribosomal RNA large subunit methyltransferase E (209 aa).

Residues Gly-63, Trp-65, Asp-83, Asp-99, and Asp-124 each coordinate S-adenosyl-L-methionine. The active-site Proton acceptor is the Lys-164.

This sequence belongs to the class I-like SAM-binding methyltransferase superfamily. RNA methyltransferase RlmE family.

The protein resides in the cytoplasm. The enzyme catalyses uridine(2552) in 23S rRNA + S-adenosyl-L-methionine = 2'-O-methyluridine(2552) in 23S rRNA + S-adenosyl-L-homocysteine + H(+). Specifically methylates the uridine in position 2552 of 23S rRNA at the 2'-O position of the ribose in the fully assembled 50S ribosomal subunit. This is Ribosomal RNA large subunit methyltransferase E from Aeromonas hydrophila subsp. hydrophila (strain ATCC 7966 / DSM 30187 / BCRC 13018 / CCUG 14551 / JCM 1027 / KCTC 2358 / NCIMB 9240 / NCTC 8049).